We begin with the raw amino-acid sequence, 358 residues long: MTLEAIRYSRGSLQILDQLLLPQQSRYEAVGSVRQAWEAIRAMKVRGAPAIALVGCLSLAVELQAGAGGPGLAALVAFVQDALSFLVTARPTAVNMARAARDLADLAAQEAEREGATEEAVRERVICWAEDMLDKDLRDNRSIGDLGAHHLLKRAAPQGGKVTVLTHCNTGALATAGYGTALGVIRSLHNLGRLEHAFCTETRPYNQGARLTAFELVYEQIPATLIADSMAAAAMAHQGVSAVVVGADRVVANGDTANKVGTYQLAIAAKHHGIPFYVAAPSSSCDLRLETGREIVIEERPDQELTDVNGVRIAAPGIGVWNPAFDVTPHDLITGGIITELGVFAPEELQAALSATIS.

M1 bears the N-acetylmethionine mark. Catalysis depends on D248, which acts as the Proton donor.

It belongs to the eIF-2B alpha/beta/delta subunits family. MtnA subfamily.

The protein resides in the cytoplasm. It is found in the nucleus. It carries out the reaction 5-(methylsulfanyl)-alpha-D-ribose 1-phosphate = 5-(methylsulfanyl)-D-ribulose 1-phosphate. It participates in amino-acid biosynthesis; L-methionine biosynthesis via salvage pathway; L-methionine from S-methyl-5-thio-alpha-D-ribose 1-phosphate: step 1/6. In terms of biological role, catalyzes the interconversion of methylthioribose-1-phosphate (MTR-1-P) into methylthioribulose-1-phosphate (MTRu-1-P). In Bos taurus (Bovine), this protein is Methylthioribose-1-phosphate isomerase.